Here is a 599-residue protein sequence, read N- to C-terminus: UvrABC system protein C (599 aa).

The GIY-YIG domain maps to Pro-15–Val-93. Residues Gln-202–Ile-237 enclose the UVR domain.

This sequence belongs to the UvrC family. As to quaternary structure, interacts with UvrB in an incision complex.

The protein resides in the cytoplasm. Its function is as follows. The UvrABC repair system catalyzes the recognition and processing of DNA lesions. UvrC both incises the 5' and 3' sides of the lesion. The N-terminal half is responsible for the 3' incision and the C-terminal half is responsible for the 5' incision. In Nitrosococcus oceani (strain ATCC 19707 / BCRC 17464 / JCM 30415 / NCIMB 11848 / C-107), this protein is UvrABC system protein C.